The following is a 325-amino-acid chain: MEKKRIYTYNSPWVIYGLSWSSRVNRPFRLAIGSFLEDYTNRVDVIQLNEETDQFEVVCGFEHPYPPTKCMWIPDKNSNRPDLLATTGDYLRLWEVGSNQRSIKLKSLLTNVISEFCAPLSSFDWNETDPSLLATSSIDTTCTIWNIETGQAKTQLIAHDKEVFDIAFARGTDLFASVGADGSLRMFDLRNLEHSTIIYETPSFVPLLRLCWNKQDPNYLATIQQDSPKVIILDIRVPSVPAAELVFHKSAVNGISWAPHSSCHICTVSDDKQALIWDLSSMPKPIEDPLLTYNALAEINQLSWSSSQPDWIAIAFSSHLQILKV.

WD repeat units lie at residues 62–104, 115–155, 158–197, and 247–287; these read EHPY…RSIK, EFCA…AKTQ, AHDK…HSTI, and FHKS…KPIE.

The protein belongs to the WD repeat DCAF7 family.

In Dictyostelium discoideum (Social amoeba), this protein is DDB1- and CUL4-associated factor 7 homolog (wdr68).